We begin with the raw amino-acid sequence, 1111 residues long: Zinc finger protein GLI1 (1111 aa).

Positions 52–78 (GYGAARETSSCTEGSLFPPPPPPRSSV) are disordered. Residues 123 to 127 (SYGHL) form an interaction with SUFU region. 5 C2H2-type zinc fingers span residues 238-263 (TDCR…NSEH), 271-298 (FVCH…MRRH), 304-328 (HKCT…LRSH), 334-359 (YMCE…NRTH), and 365-390 (YVCK…KTVH). The interaction with DNA stretch occupies residues 286-294 (KAQYMLVVH). Interaction with DNA regions lie at residues 348 to 353 (ASDRAK) and 378 to 384 (DPSSLRK). Positions 378–487 (DPSSLRKHVK…EDLSSLDEGP (110 aa)) are disordered. Positions 416–431 (EPKREREGGSGREESR) are enriched in basic and acidic residues. Residues 439 to 465 (MPQQSPGAQSSCSSDHSPAGSAANTDS) are compositionally biased toward polar residues. Residue lysine 520 is modified to N6-acetyllysine. Disordered stretches follow at residues 528-583 (GAPV…LPGL), 598-649 (ARGS…RAAD), 673-692 (TGRN…QPPS), and 832-891 (PCLN…SSHS). Positions 546–562 (SSSSSMSSAYTVSRRSS) are enriched in low complexity. The span at 640–649 (RASDPARAAD) shows a compositional bias: basic and acidic residues. The segment covering 855 to 870 (LPQPQYPQSGPYPQPP) has biased composition (pro residues). Residue lysine 1008 forms a Glycyl lysine isopeptide (Lys-Gly) (interchain with G-Cter in SUMO2) linkage. The interval 1064 to 1093 (LSPPLSHEQGDSSKNTPSPSGPPNMAVGNM) is disordered.

It belongs to the GLI C2H2-type zinc-finger protein family. In terms of assembly, interacts with KIF7. Interacts with STK36. Interacts with ZIC1; the interaction enhances transcription activation. Interacts with SUFU; this inhibits transcriptional activation by GLI1. Phosphorylated in vitro by ULK3. In terms of processing, acetylation at Lys-520 down-regulates transcriptional activity. Deacetylated by HDAC1. Post-translationally, ubiquitinated by the CRL2(FEM1B) complex, suppressing GLI1 transcriptional activator activity.

It is found in the cytoplasm. The protein localises to the nucleus. Functionally, acts as a transcriptional activator. Binds to the DNA consensus sequence 5'-GACCACCCA-3'. Regulates the transcription of specific genes during normal development. Plays a role in craniofacial development and digital development, as well as development of the central nervous system and gastrointestinal tract. Mediates SHH signaling. Plays a role in cell proliferation and differentiation via its role in SHH signaling. This Mus musculus (Mouse) protein is Zinc finger protein GLI1 (Gli1).